Here is a 158-residue protein sequence, read N- to C-terminus: MSTEKTYPMTQEGKQKLENELEQLKTVRRKEVVERIKIARSFGDLSENSEYDAAKDEQAFVEGRITQLENMIRNAVIIKDTGEVSTVVTLGKTVTFKELPNGDEEAYTIVGSAEADPFEGRISNDSPIAKSLLGKQIGEKVTIQTPGGEMQVEIVSVK.

Positions 3–75 form a coiled coil; that stretch reads TEKTYPMTQE…TQLENMIRNA (73 aa).

The protein belongs to the GreA/GreB family.

In terms of biological role, necessary for efficient RNA polymerase transcription elongation past template-encoded arresting sites. The arresting sites in DNA have the property of trapping a certain fraction of elongating RNA polymerases that pass through, resulting in locked ternary complexes. Cleavage of the nascent transcript by cleavage factors such as GreA or GreB allows the resumption of elongation from the new 3'terminus. GreA releases sequences of 2 to 3 nucleotides. The polypeptide is Transcription elongation factor GreA (Bacillus cereus (strain ATCC 14579 / DSM 31 / CCUG 7414 / JCM 2152 / NBRC 15305 / NCIMB 9373 / NCTC 2599 / NRRL B-3711)).